The primary structure comprises 129 residues: Defensin-like protein 182 (129 aa).

The first 26 residues, Met1–Gly26, serve as a signal peptide directing secretion. Disulfide bonds link Cys29–Cys70, Cys36–Cys55, Cys39–Cys64, Cys43–Cys66, Cys83–Cys129, Cys94–Cys114, Cys99–Cys123, and Cys103–Cys125.

This sequence belongs to the DEFL family.

Its subcellular location is the secreted. Its function is as follows. Confers broad-spectrum resistance to pathogens. The protein is Defensin-like protein 182 (PDF3.2) of Arabidopsis thaliana (Mouse-ear cress).